A 228-amino-acid chain; its full sequence is Putative elongation factor Tu-like protein (228 aa).

Residues 6 to 212 (KPHINVGTIG…LPIREKDNPF (207 aa)) enclose the tr-type G domain. The G1 stretch occupies residues 15 to 22 (GHVDHGKT). Residues 59–63 (GITIS) are G2. The G3 stretch occupies residues 80–83 (DCPG). The segment at 135 to 138 (NKCD) is G4. The G5 stretch occupies residues 173 to 175 (SAV).

Belongs to the TRAFAC class translation factor GTPase superfamily. Classic translation factor GTPase family. EF-Tu/EF-1A subfamily.

The polypeptide is Putative elongation factor Tu-like protein (Ehrlichia ruminantium (strain Welgevonden)).